A 29-amino-acid chain; its full sequence is Small toxic protein ZorO (29 aa).

Residues 10–27 form a helical membrane-spanning segment; the sequence is VLIAVLELLVALLRLIDL.

It is found in the cell inner membrane. Toxic component of a type I toxin-antitoxin (TA) system. Expression in the absence of its cognate antitoxin (small sRNA orzO) leads to cell stasis and a decrease in colony-forming units. Repression of ZorO toxicity requires base pairing between zorO mRNA and sRNA OrzO, as well as RNase III (rnc), suggesting the mRNA is degraded. Base pairing occurs between 18 bases in the 5' UTR of zorO mRNA and the 5' end of OrzO sRNA. sRNA OrzP, which differs only in 4 of these 18 bases, does not repress ZorO toxicity. Integration of the protein into the inner membrane damages membrane integrity and affects membrane potential. It leads to increased levels of hydroxyl radicals. In Escherichia coli O157:H7, this protein is Small toxic protein ZorO.